The primary structure comprises 257 residues: Hydroxyethylthiazole kinase 1 (257 aa).

Position 41 (Met-41) interacts with substrate. ATP-binding residues include Lys-117 and Thr-162. Substrate is bound at residue Gly-189.

The protein belongs to the Thz kinase family. Requires Mg(2+) as cofactor.

The catalysed reaction is 5-(2-hydroxyethyl)-4-methylthiazole + ATP = 4-methyl-5-(2-phosphooxyethyl)-thiazole + ADP + H(+). The protein operates within cofactor biosynthesis; thiamine diphosphate biosynthesis; 4-methyl-5-(2-phosphoethyl)-thiazole from 5-(2-hydroxyethyl)-4-methylthiazole: step 1/1. Functionally, catalyzes the phosphorylation of the hydroxyl group of 4-methyl-5-beta-hydroxyethylthiazole (THZ). This Oceanobacillus iheyensis (strain DSM 14371 / CIP 107618 / JCM 11309 / KCTC 3954 / HTE831) protein is Hydroxyethylthiazole kinase 1.